Reading from the N-terminus, the 105-residue chain is METLRYRFDGQRGARAGLEHALVGVVASGNLEVLVERVPLEGAMEIDILTAARGFGAIWQAVLDDFAARHPLRDVRISINDVGATPAVVSLRLEQALDVLQGADA.

At S28 the chain carries O-(phosphoribosyl dephospho-coenzyme A)serine.

It belongs to the MdcC family. Covalently binds the prosthetic group of malonate decarboxylase.

It is found in the cytoplasm. Its function is as follows. Subunit of malonate decarboxylase, it is an acyl carrier protein to which acetyl and malonyl thioester residues are bound via a 2'-(5''-phosphoribosyl)-3'-dephospho-CoA prosthetic group and turn over during the catalytic mechanism. This is Malonate decarboxylase acyl carrier protein from Xanthomonas axonopodis pv. citri (strain 306).